Consider the following 143-residue polypeptide: MGTFGIVALSIICSIAFLFVAYGVLRLINSIRRRNMMTADVSSVKSSQTWNFLKNPFSNSAKFEALDADDMWDTRVEEAELNTIPSASPFIDHTSETVPFVNTEAPPPRLSSSFSRQSGENAETQSQVSASPFNDKNSPYVQE.

Residues 4–24 (FGIVALSIICSIAFLFVAYGV) traverse the membrane as a helical segment. The tract at residues 97-143 (TVPFVNTEAPPPRLSSSFSRQSGENAETQSQVSASPFNDKNSPYVQE) is disordered. The span at 110-143 (LSSSFSRQSGENAETQSQVSASPFNDKNSPYVQE) shows a compositional bias: polar residues.

It is found in the golgi apparatus membrane. This is an uncharacterized protein from Schizosaccharomyces pombe (strain 972 / ATCC 24843) (Fission yeast).